Reading from the N-terminus, the 176-residue chain is Nuclear transcription factor Y subunit B-10 (176 aa).

Positions 1-15 (MAESQTGGGGGGSHE) are enriched in gly residues. The tract at residues 1–29 (MAESQTGGGGGGSHESGGDQSPRSLNVRE) is disordered. N-acetylalanine is present on Ala2. Residues 34-40 (LPIANIS) mediate DNA binding. The tract at residues 61–72 (MQECVSEFISFV) is subunit association domain (SAD). The interval 121-176 (GDTKGSGKGGESSAKRDGQPSQVSQFSQVPQQGSFSQGPYGNSQGSNMMVQMPGTE) is disordered. Residues 139 to 159 (QPSQVSQFSQVPQQGSFSQGP) show a composition bias toward low complexity. Polar residues predominate over residues 160-169 (YGNSQGSNMM).

This sequence belongs to the NFYB/HAP3 subunit family. In terms of assembly, heterotrimeric transcription factor composed of three components, NF-YA, NF-YB and NF-YC. NF-YB and NF-YC must interact and dimerize for NF-YA association and DNA binding. In terms of tissue distribution, expressed in the whole plant, except roots.

Its subcellular location is the nucleus. Functionally, component of the NF-Y/HAP transcription factor complex. The NF-Y complex stimulates the transcription of various genes by recognizing and binding to a CCAAT motif in promoters. The sequence is that of Nuclear transcription factor Y subunit B-10 (NFYB10) from Arabidopsis thaliana (Mouse-ear cress).